The chain runs to 442 residues: UDP-N-acetylglucosamine--peptide N-acetylglucosaminyltransferase stabilizing protein GtfB (442 aa).

This sequence belongs to the GtfB family. As to quaternary structure, interacts with glycosyltransferase GtfA (Gtf1). Interacts with glycosyltransferase GtfA; probably forms a heterotetramer with 2 subunits each of GtfA and GtfB. Part of the accessory SecA2/SecY2 protein translocation apparatus.

The protein resides in the cell membrane. It functions in the pathway protein modification; protein glycosylation. Required for the polymorphic O-glycosylation of the serine-rich repeat protein Srr2. A stabilizing protein that is part of the accessory SecA2/SecY2 system specifically required to export serine-rich repeat proteins, probably Srr2 in this organism. The GtfA-GtfB (Gtf1-Gtf2 in this bacteria) complex adds GlcNAc from UDP-GlcNAc to Srr2 substrate, attaching the first sugar residue. Stabilizes the glycosylation activity of GtfA in vivo. Upon expression in a gtfB deletion mutant of S.parasanguis, GtfB confers incorrect glycosylation and partial complementation of a biofilm formation defect, while GtfA/GtfB restores correct expression of serine-rich repeat protein Fap1 and completely restores a biofilm formation defect in a S.parasanguis double gtfA-gtfB deletion. In Streptococcus agalactiae, this protein is UDP-N-acetylglucosamine--peptide N-acetylglucosaminyltransferase stabilizing protein GtfB.